A 231-amino-acid polypeptide reads, in one-letter code: Superoxide dismutase [Mn] 1, mitochondrial (231 aa).

A mitochondrion-targeting transit peptide spans 1-29 (MAIRCVASRKTLAGLKETSSRLLRIRGIQ). Residues histidine 55 and histidine 103 each contribute to the Mn(2+) site. Serine 124 bears the Phosphoserine mark. Mn(2+) is bound by residues aspartate 192 and histidine 196.

The protein belongs to the iron/manganese superoxide dismutase family. As to quaternary structure, homotetramer. Mn(2+) serves as cofactor.

Its subcellular location is the mitochondrion matrix. The catalysed reaction is 2 superoxide + 2 H(+) = H2O2 + O2. Its activity is regulated as follows. Activated by MTM1. Destroys superoxide anion radicals which are normally produced within the cells and which are toxic to biological systems. The sequence is that of Superoxide dismutase [Mn] 1, mitochondrial (MSD1) from Arabidopsis thaliana (Mouse-ear cress).